A 156-amino-acid chain; its full sequence is Endoribonuclease YbeY (156 aa).

The Zn(2+) site is built by histidine 117, histidine 121, and histidine 127.

Belongs to the endoribonuclease YbeY family. Requires Zn(2+) as cofactor.

Its subcellular location is the cytoplasm. Its function is as follows. Single strand-specific metallo-endoribonuclease involved in late-stage 70S ribosome quality control and in maturation of the 3' terminus of the 16S rRNA. The chain is Endoribonuclease YbeY from Shewanella halifaxensis (strain HAW-EB4).